Consider the following 243-residue polypeptide: Thiamin pyrophosphokinase 1 (243 aa).

This sequence belongs to the thiamine pyrophosphokinase family.

The enzyme catalyses thiamine + ATP = thiamine diphosphate + AMP + H(+). Its pathway is cofactor biosynthesis; thiamine diphosphate biosynthesis; thiamine diphosphate from thiamine: step 1/1. Its function is as follows. Catalyzes the phosphorylation of thiamine to thiamine pyrophosphate. Functions cell non-autonomously. This chain is Thiamin pyrophosphokinase 1, found in Caenorhabditis elegans.